Consider the following 1299-residue polypeptide: DNA-directed RNA polymerase subunit beta' (1299 aa).

Zn(2+)-binding residues include C60, C62, C75, and C78. A disordered region spans residues 385–405 (GRRGRPVTGPGNRPLKSLSDM). D535, D537, and D539 together coordinate Mg(2+). Zn(2+) contacts are provided by C886, C962, C969, and C972.

It belongs to the RNA polymerase beta' chain family. As to quaternary structure, the RNAP catalytic core consists of 2 alpha, 1 beta, 1 beta' and 1 omega subunit. When a sigma factor is associated with the core the holoenzyme is formed, which can initiate transcription. Mg(2+) serves as cofactor. Zn(2+) is required as a cofactor.

It carries out the reaction RNA(n) + a ribonucleoside 5'-triphosphate = RNA(n+1) + diphosphate. DNA-dependent RNA polymerase catalyzes the transcription of DNA into RNA using the four ribonucleoside triphosphates as substrates. The protein is DNA-directed RNA polymerase subunit beta' of Streptomyces coelicolor (strain ATCC BAA-471 / A3(2) / M145).